The chain runs to 128 residues: Flagellar basal body rod protein FlgB (128 aa).

Belongs to the flagella basal body rod proteins family. The basal body constitutes a major portion of the flagellar organelle and consists of a number of rings mounted on a central rod. In Gram-negative bacteria, at least four rings, L, P, S and M are present, whereas Gram-positive bacteria lack the L and P rings. The rod consists of about 26 subunits of FlgG in the distal portion, and FlgB, FlgC and FlgF build up the proximal portion of the rod with about 6 subunits each. Rod assembly occurs by export via the flagellum-specific pathway of its constituent proteins and by their incorporation into the rod structure in the probable order of FlgB, FlgC, FlgF and FlgG. Another protein, FliE, also assembles onto the stable rod structure.

The protein localises to the bacterial flagellum basal body. Its function is as follows. Structural component of flagellum, the bacterial motility apparatus. Part of the rod structure of flagellar basal body. This is Flagellar basal body rod protein FlgB from Cereibacter sphaeroides (strain ATCC 17029 / ATH 2.4.9) (Rhodobacter sphaeroides).